A 388-amino-acid polypeptide reads, in one-letter code: Formate-dependent phosphoribosylglycinamide formyltransferase (388 aa).

N(1)-(5-phospho-beta-D-ribosyl)glycinamide contacts are provided by residues 11–12 (EL) and E71. Residues R103, K144, 149-154 (SSGKGQ), 184-187 (EEFI), and E192 each bind ATP. One can recognise an ATP-grasp domain in the interval 108–300 (DLAAKELGLK…EFELHLRAVL (193 aa)). Residues E257 and E270 each coordinate Mg(2+). Residues D277, K349, and 356–357 (RR) contribute to the N(1)-(5-phospho-beta-D-ribosyl)glycinamide site.

Belongs to the PurK/PurT family. As to quaternary structure, homodimer.

The enzyme catalyses N(1)-(5-phospho-beta-D-ribosyl)glycinamide + formate + ATP = N(2)-formyl-N(1)-(5-phospho-beta-D-ribosyl)glycinamide + ADP + phosphate + H(+). It functions in the pathway purine metabolism; IMP biosynthesis via de novo pathway; N(2)-formyl-N(1)-(5-phospho-D-ribosyl)glycinamide from N(1)-(5-phospho-D-ribosyl)glycinamide (formate route): step 1/1. In terms of biological role, involved in the de novo purine biosynthesis. Catalyzes the transfer of formate to 5-phospho-ribosyl-glycinamide (GAR), producing 5-phospho-ribosyl-N-formylglycinamide (FGAR). Formate is provided by PurU via hydrolysis of 10-formyl-tetrahydrofolate. In Bacteroides fragilis (strain ATCC 25285 / DSM 2151 / CCUG 4856 / JCM 11019 / LMG 10263 / NCTC 9343 / Onslow / VPI 2553 / EN-2), this protein is Formate-dependent phosphoribosylglycinamide formyltransferase.